The primary structure comprises 149 residues: Small ribosomal subunit protein bS6 (149 aa).

The disordered stretch occupies residues 94–149 (EKHEEGPSAMMQKRDRDDRPRRDGDRPDRGGFGDRGPRPDRGDRDDRPRRPREDRA).

The protein belongs to the bacterial ribosomal protein bS6 family.

Binds together with bS18 to 16S ribosomal RNA. The chain is Small ribosomal subunit protein bS6 from Sinorhizobium fredii (strain NBRC 101917 / NGR234).